We begin with the raw amino-acid sequence, 317 residues long: Acetylglutamate kinase (317 aa).

Residues Gly75–Gly76, Arg97, and Asn196 each bind substrate.

This sequence belongs to the acetylglutamate kinase family. ArgB subfamily.

The protein resides in the cytoplasm. The catalysed reaction is N-acetyl-L-glutamate + ATP = N-acetyl-L-glutamyl 5-phosphate + ADP. The protein operates within amino-acid biosynthesis; L-arginine biosynthesis; N(2)-acetyl-L-ornithine from L-glutamate: step 2/4. Functionally, catalyzes the ATP-dependent phosphorylation of N-acetyl-L-glutamate. The chain is Acetylglutamate kinase from Corynebacterium jeikeium (strain K411).